We begin with the raw amino-acid sequence, 249 residues long: MAGHSQFKNIMHRKGGQDAKRAQLFTKLAREITVSAKLGSPDPNANPRLRAAILAARAQSLPKDNIQRAIDKATSGGDAANLEELRYEGYGPGNVAVIVECLTDNRNRTASEVRTAFSKNGGTMGESGSVAFNFERVGLIHYPLKAGAADAVLDAGIEAGADDVQSSEDGHDITCRPDDLNAVSKALEAALGDPEFARLDWKPLVQVPVDADTVPALMKFLDILDDCDDVQRVAANYEIDDAIMEKLGA.

The protein belongs to the TACO1 family.

Its subcellular location is the cytoplasm. This is Probable transcriptional regulatory protein Rru_A1086 from Rhodospirillum rubrum (strain ATCC 11170 / ATH 1.1.1 / DSM 467 / LMG 4362 / NCIMB 8255 / S1).